The sequence spans 156 residues: E3 ubiquitin-protein ligase RNF181 (156 aa).

The RING-type; atypical zinc-finger motif lies at cysteine 79 to arginine 120. A disordered region spans residues lysine 135–threonine 156.

It belongs to the RNF181 family.

The catalysed reaction is S-ubiquitinyl-[E2 ubiquitin-conjugating enzyme]-L-cysteine + [acceptor protein]-L-lysine = [E2 ubiquitin-conjugating enzyme]-L-cysteine + N(6)-ubiquitinyl-[acceptor protein]-L-lysine.. Its pathway is protein modification; protein ubiquitination. Its function is as follows. E3 ubiquitin-protein ligase which accepts ubiquitin from an E2 ubiquitin-conjugating enzyme in the form of a thioester and then directly transfers the ubiquitin to targeted substrates. Catalyzes monoubiquitination of 26S proteasome subunit PSMC2/RPT1. The polypeptide is E3 ubiquitin-protein ligase RNF181 (rnf181) (Danio rerio (Zebrafish)).